Here is a 358-residue protein sequence, read N- to C-terminus: Methylthioribose-1-phosphate isomerase (358 aa).

Substrate is bound by residues 54-56 (RGA), Arg-96, and Gln-205. Asp-246 serves as the catalytic Proton donor. 256 to 257 (NK) is a binding site for substrate.

This sequence belongs to the eIF-2B alpha/beta/delta subunits family. MtnA subfamily.

It carries out the reaction 5-(methylsulfanyl)-alpha-D-ribose 1-phosphate = 5-(methylsulfanyl)-D-ribulose 1-phosphate. The protein operates within amino-acid biosynthesis; L-methionine biosynthesis via salvage pathway; L-methionine from S-methyl-5-thio-alpha-D-ribose 1-phosphate: step 1/6. Catalyzes the interconversion of methylthioribose-1-phosphate (MTR-1-P) into methylthioribulose-1-phosphate (MTRu-1-P). In Azotobacter vinelandii (strain DJ / ATCC BAA-1303), this protein is Methylthioribose-1-phosphate isomerase.